A 1328-amino-acid chain; its full sequence is MSGVKYEVAKFNGDNGFSTWQRRMRDLLIQQGLHKVLDVDSKKPDTMKAEDWADLDERAASAIRLHLSDDVVNNIIDEDTARGIWTRLESLYMSKTLTNKLYLKKQLYALHMSEGTNFLSHLNVFNGLITQLANLGVKIEEEDKAILLLNSLPSSYDNLATTILHGKTTIELKDVTSALLLNEKMRKKPENQGQALITEGRGRSYQRSSNNYGRSGARGKSKNRSKSRVRNCYNCNQPGHFKRDCPNPRKGKGETSGQKNDDNTAAMVQNNDNVVLFINEEEECMHLSGPESEWVVDTAASHHATPVRDLFCRYVAGDFGTVKMGNTSYSKIAGIGDICIKTNVGCTLVLKDVRHVPDLRMNLISGIALDRDGYESYFANQKWRLTKGSLVIAKGVARGTLYRTNAEICQGELNAAQDEISVDLWHKRMGHMSEKGLQILAKKSLISYAKGTTVKPCDYCLFGKQHRVSFQTSSERKLNILDLVYSDVCGPMEIESMGGNKYFVTFIDDASRKLWVYILKTKDQVFQVFQKFHALVERETGRKLKRLRSDNGGEYTSREFEEYCSSHGIRHEKTVPGTPQHNGVAERMNRTIVEKVRSMLRMAKLPKSFWGEAVQTACYLINRSPSVPLAFEIPERVWTNKEVSYSHLKVFGCRAFAHVPKEQRTKLDDKSIPCIFIGYGDEEFGYRLWDPVKKKVIRSRDVVFRESEVRTAADMSEKVKNGIIPNFVTIPSTSNNPTSAESTTDEVSEQGEQPGEVIEQGEQLDEGVEEVEHPTQGEEQHQPLRRSERPRVESRRYPSTEYVLISDDREPESLKEVLSHPEKNQLMKAMQEEMESLQKNGTYKLVELPKGKRPLKCKWVFKLKKDGDCKLVRYKARLVVKGFEQKKGIDFDEIFSPVVKMTSIRTILSLAASLDLEVEQLDVKTAFLHGDLEEEIYMEQPEGFEVAGKKHMVCKLNKSLYGLKQAPRQWYMKFDSFMKSQTYLKTYSDPCVYFKRFSENNFIILLLYVDDMLIVGKDKGLIAKLKGDLSKSFDMKDLGPAQQILGMKIVRERTSRKLWLSQEKYIERVLERFNMKNAKPVSTPLAGHLKLSKKMCPTTVEEKGNMAKVPYSSAVGSLMYAMVCTRPDIAHAVGVVSRFLENPGKEHWEAVKWILRYLRGTTGDCLCFGGSDPILKGYTDADMAGDIDNRKSSTGYLFTFSGGAISWQSKLQKCVALSTTEAEYIAATETGKEMIWLKRFLQELGLHQKEYVVYCDSQSAIDLSKNSMYHARTKHIDVRYHWIREMVDDESLKVLKISTNENPADMLTKVVPRNKFELCKELVGMHSN.

Residues 189–265 (PENQGQALIT…SGQKNDDNTA (77 aa)) are disordered. The segment covering 217-229 (ARGKSKNRSKSRV) has biased composition (basic residues). A CCHC-type zinc finger spans residues 230-247 (RNCYNCNQPGHFKRDCPN). A compositionally biased stretch (basic and acidic residues) spans 241–253 (FKRDCPNPRKGKG). Residue Asp-297 is the For protease activity of the active site. One can recognise an Integrase catalytic domain in the interval 473 to 642 (SSERKLNILD…IPERVWTNKE (170 aa)). A compositionally biased stretch (polar residues) spans 729–742 (TIPSTSNNPTSAES). Residues 729–800 (TIPSTSNNPT…RVESRRYPST (72 aa)) form a disordered region. Basic and acidic residues predominate over residues 770–798 (EVEHPTQGEEQHQPLRRSERPRVESRRYP).

It carries out the reaction DNA(n) + a 2'-deoxyribonucleoside 5'-triphosphate = DNA(n+1) + diphosphate. The chain is Retrovirus-related Pol polyprotein from transposon TNT 1-94 from Nicotiana tabacum (Common tobacco).